Consider the following 112-residue polypeptide: UPF0375 protein R05A10.4 (112 aa).

The N-terminal stretch at M1–A19 is a signal peptide. A glycan (N-linked (GlcNAc...) asparagine) is linked at N59.

This sequence belongs to the UPF0375 family.

Its subcellular location is the secreted. This Caenorhabditis elegans protein is UPF0375 protein R05A10.4.